An 887-amino-acid chain; its full sequence is MGEAEKFHYIYSCDLDINVQLKIGSLEGKREQKSYKAVLEDPMLKFSGLYQETCSDLYVTCQVFAEGKPLALPVRTSYKPFSTRWNWNEWLKLPVKYPDLPRNAQVALTIWDVYGPGRAVPVGGTTVSLFGKYGMFRQGMHDLKVWPNVEADGSEPTRTPGRTSSTLSEDQMSRLAKLTKAHRQGHMVKVDWLDRLTFREIEMINESEKRSSNFMYLMVEFRCVKCDDKEYGIVYYEKDGDESSPILTSFELVKVPDPQMSMENLVESKHHKLARSLRSGPSDHDLKPNATTRDQLNIIVSYPPTKQLTYEEQDLVWKFRYYLTNQEKALTKFLKCVNWDLPQEAKQALELLGKWKPMDVEDSLELLSSHYTNPTVRRYAVARLRQADDEDLLMYLLQLVQALKYENFDDIKNGLEPTKKDSQASVSESLSSSGVSSADIDSSQIITNPLPPVASPPPASKSKEVSDGENLEQDLCTFLISRACKNSTLANYLYWYVIVECEDQDTQQRDPKTHEMYLNVMRRFSQALLKGDKSVRVMRSLLAAQQTFVDRLVHLMKAVQRESGNRKKKNERLQALLGDNEKMNLSDVELIPLPLEPQVKIRGIIPETATLFKSALMPAQLFFKTEDGGKYPVIFKHGDDLRQDQLILQIISLMDKLLRKENLDLKLTPYKVLATSTKHGFMQFIQSVPVAEVLDTEGSIQNFFRKYAPSETGPNGISAEVMDTYVKSCAGYCVITYILGVGDRHLDNLLLTKTGKLFHIDFGYILGRDPKPLPPPMKLNKEMVEGMGGTQSEQYQEFRKQCYTAFLHLRRYSNLILNLFSLMVDANIPDIALEPDKTVKKVQDKFRLDLSDEEAVHYMQSLIDESVHALFAAVVEQIHKFAQYWRK.

A C2 PI3K-type domain is found at 35 to 184; sequence YKAVLEDPML…LAKLTKAHRQ (150 aa). Residues 149 to 170 are disordered; sequence VEADGSEPTRTPGRTSSTLSED. A compositionally biased stretch (polar residues) spans 156-170; it reads PTRTPGRTSSTLSED. Threonine 163 is subject to Phosphothreonine; by AMPK. Serine 165 bears the Phosphoserine; by AMPK mark. Phosphoserine occurs at positions 244, 261, and 282. In terms of domain architecture, PIK helical spans 283–520; that stretch reads DHDLKPNATT…PKTHEMYLNV (238 aa). Residues 416-467 are disordered; that stretch reads EPTKKDSQASVSESLSSSGVSSADIDSSQIITNPLPPVASPPPASKSKEVSD. Residues 423–444 are compositionally biased toward low complexity; it reads QASVSESLSSSGVSSADIDSSQ. Pro residues predominate over residues 449 to 459; that stretch reads PLPPVASPPPA. Positions 605–871 constitute a PI3K/PI4K catalytic domain; the sequence is IPETATLFKS…LIDESVHALF (267 aa). The G-loop stretch occupies residues 611–617; sequence LFKSALM. Positions 740–748 are catalytic loop; it reads GVGDRHLDN. The activation loop stretch occupies residues 759 to 780; it reads HIDFGYILGRDPKPLPPPMKLN.

Belongs to the PI3/PI4-kinase family. Component of the PI3K (PI3KC3/PI3K-III/class III phosphatidylinositol 3-kinase) complex the core of which is composed of the catalytic subunit PIK3C3, the regulatory subunit PIK3R4 and BECN1 associating with additional regulatory/auxiliary subunits to form alternative complex forms. Alternative complex forms containing a fourth regulatory subunit in a mutually exclusive manner are: the PI3K complex I (PI3KC3-C1) containing ATG14, and the PI3K complex II (PI3KC3-C2) containing UVRAG. PI3KC3-C1 displays a V-shaped architecture with PIK3R4 serving as a bridge between PIK3C3 and the ATG14:BECN1 subcomplex. Both, PI3KC3-C1 and PI3KC3-C2, can associate with further regulatory subunits such as RUBCN, SH3GLB1/Bif-1 and AMBRA1. PI3KC3-C1 probably associates with PIK3CB. Interacts with RAB7A in the presence of PIK3R4. Interacts with AMBRA1. Interacts with BECN1P1/BECN2. Interacts with SLAMF1. May interact with DYN2. May be a component of a complex composed of RAB5A (in GDP-bound form), DYN2 and PIK3C3. Interacts with NCKAP1L. Interacts with ATG14; this interaction is increased in the absence of TMEM39A. Interacts with STEEP1; the interaction is STING1-dependent and required for trafficking of STING1 from the endoplasmic reticulum. Interacts with YWHAG. Interacts with ARMC3. It depends on Mn(2+) as a cofactor. Post-translationally, ubiquitinated via 'Lys-29'- and 'Lys-48'-linked ubiquitination by UBE3C, promoting its degradation. Deubiquitination by ZRANB1/TRABID promotes its stabilization, leading to autophagosome maturation.

The protein localises to the midbody. The protein resides in the late endosome. Its subcellular location is the cytoplasmic vesicle. It is found in the autophagosome. The enzyme catalyses a 1,2-diacyl-sn-glycero-3-phospho-(1D-myo-inositol) + ATP = a 1,2-diacyl-sn-glycero-3-phospho-(1D-myo-inositol-3-phosphate) + ADP + H(+). Its function is as follows. Catalytic subunit of the PI3K complex that mediates formation of phosphatidylinositol 3-phosphate; different complex forms are believed to play a role in multiple membrane trafficking pathways: PI3KC3-C1 is involved in initiation of autophagosomes and PI3KC3-C2 in maturation of autophagosomes and endocytosis. As part of PI3KC3-C1, promotes endoplasmic reticulum membrane curvature formation prior to vesicle budding. Involved in regulation of degradative endocytic trafficking and required for the abscission step in cytokinesis, probably in the context of PI3KC3-C2. Involved in the transport of lysosomal enzyme precursors to lysosomes. Required for transport from early to late endosomes. The sequence is that of Phosphatidylinositol 3-kinase catalytic subunit type 3 from Rattus norvegicus (Rat).